The sequence spans 186 residues: Adenine phosphoribosyltransferase (186 aa).

Belongs to the purine/pyrimidine phosphoribosyltransferase family. As to quaternary structure, homodimer.

The protein localises to the cytoplasm. The catalysed reaction is AMP + diphosphate = 5-phospho-alpha-D-ribose 1-diphosphate + adenine. It participates in purine metabolism; AMP biosynthesis via salvage pathway; AMP from adenine: step 1/1. Catalyzes a salvage reaction resulting in the formation of AMP, that is energically less costly than de novo synthesis. The sequence is that of Adenine phosphoribosyltransferase from Xanthomonas campestris pv. campestris (strain B100).